A 533-amino-acid chain; its full sequence is Tyrosine-protein kinase transforming protein Fps (533 aa).

A disordered region spans residues 1–46 (ASGQLHRPQPQEHTSTSAAAGTWRHTQASESRHRLPHCSAAPSHQD). Over residues 11 to 29 (QEHTSTSAAAGTWRHTQAS) the composition is skewed to polar residues. The region spanning 50-124 (MGFGPELWCP…LQEDRQSVCS (75 aa)) is the F-BAR; degenerate domain. An SH2 domain is found at 171–260 (WYHGAIPRSE…KSGIVLTRAV (90 aa)). The region spanning 272-525 (VLLGERIGRG…PSFGAVHQDL (254 aa)) is the Protein kinase domain. Residues 278–286 (IGRGNFGEV) and Lys-301 each bind ATP. The active-site Proton acceptor is the Asp-394. Tyr-424 bears the Phosphotyrosine; by autocatalysis mark.

Belongs to the protein kinase superfamily. Tyr protein kinase family. Fes/fps subfamily.

The enzyme catalyses L-tyrosyl-[protein] + ATP = O-phospho-L-tyrosyl-[protein] + ADP + H(+). The protein is Tyrosine-protein kinase transforming protein Fps (V-FPS) of Gallus gallus (Chicken).